A 175-amino-acid polypeptide reads, in one-letter code: Alkyl hydroperoxide reductase AhpD (175 aa).

C131 serves as the catalytic Proton donor. Cysteines 131 and 134 form a disulfide. C134 acts as the Cysteine sulfenic acid (-SOH) intermediate in catalysis.

Belongs to the AhpD family.

The catalysed reaction is N(6)-[(R)-dihydrolipoyl]-L-lysyl-[lipoyl-carrier protein] + a hydroperoxide = N(6)-[(R)-lipoyl]-L-lysyl-[lipoyl-carrier protein] + an alcohol + H2O. In terms of biological role, antioxidant protein with alkyl hydroperoxidase activity. Required for the reduction of the AhpC active site cysteine residues and for the regeneration of the AhpC enzyme activity. In Brucella canis (strain ATCC 23365 / NCTC 10854 / RM-666), this protein is Alkyl hydroperoxide reductase AhpD.